The primary structure comprises 666 residues: Endogenous retrovirus group K member 9 Gag polyprotein (666 aa).

Residue glycine 2 is the site of N-myristoyl glycine attachment. Residues 165–264 (GKGPELVGPS…APPSRQGSEL (100 aa)) form a disordered region. The segment covering 232–247 (GMPPAPQGRAPYPQPP) has biased composition (pro residues). 2 CCHC-type zinc fingers span residues 544–561 (GKCY…NCPV) and 580–597 (DLCP…QCRS). The interval 598-641 (KFDKNGQPLSGNEQRGQPQAPQQTGAFPIQPFVPQGFQGQQPPL) is disordered. A compositionally biased stretch (polar residues) spans 604–622 (QPLSGNEQRGQPQAPQQTG). The segment covering 624 to 640 (FPIQPFVPQGFQGQQPP) has biased composition (low complexity).

This sequence belongs to the beta type-B retroviral Gag protein family. HERV class-II K(HML-2) gag subfamily. In terms of processing, myristoylation is essential for retroviral assembly. Alteration of the glycine residue leads to a block in the budding of particles and an accumulation of Gag inside the cell. Specific enzymatic cleavages may yield mature proteins.

The protein resides in the cell membrane. The products of the Gag polyproteins of infectious retroviruses perform highly complex orchestrated tasks during the assembly, budding, maturation, and infection stages of the viral replication cycle. During viral assembly, the proteins form membrane associations and self-associations that ultimately result in budding of an immature virion from the infected cell. Gag precursors also function during viral assembly to selectively bind and package two plus strands of genomic RNA. Endogenous Gag proteins may have kept, lost or modified their original function during evolution. This is Endogenous retrovirus group K member 9 Gag polyprotein (ERVK-9) from Homo sapiens (Human).